The following is a 112-amino-acid chain: Beta-defensin 126 (112 aa).

An N-terminal signal peptide occupies residues 1-20 (MKSLLFTLAVFMLLAQLVSG). Residues 21–63 (NWYVKKCLNDVGICKKKCKPEELHVKNGRAMCGKQRDCCVPAD) are in vitro binds to LPS, mediates antimicrobial activity and inhibits LPS-mediated inflammation. 3 disulfide bridges follow: C27/C58, C34/C52, and C38/C59.

It belongs to the beta-defensin family. Homodimer or homooligomer; disulfide-linked. Post-translationally, O-glycosylated; glycans contain alpha(2,3)-linked sialic acids.

The protein localises to the secreted. Functionally, highly glycosylated atypical beta-defensin involved in several aspects of sperm function. Facilitates sperm transport in the female reproductive tract and contributes to sperm protection against immunodetection; both functions are probably implicating the negative surface charge provided by its O-linked oligosaccharides in the sperm glycocalyx. Involved in binding of sperm to oviductal epithelial cells to form a sperm reservoir until ovulation. Release from the sperm surface during capacitation and ovaluation by an elevation of oviductal fluid pH is unmasking other surface components and allows sperm to penetrate the cumulus matrix and bind to the zona pellucida of the oocyte. In vitro has antimicrobial activity and may inhibit LPS-mediated inflammation. In Hylobates lar (Lar gibbon), this protein is Beta-defensin 126 (DEFB126).